The following is a 100-amino-acid chain: NADH-quinone oxidoreductase subunit K (100 aa).

A run of 3 helical transmembrane segments spans residues 3–23 (LNAYLVLAAMLFTIGVFGIFL), 29–49 (ISIMMSIELMLLAVNINFVAF), and 60–80 (IFTFFVVTVAAAEAAIGLAIL).

It belongs to the complex I subunit 4L family. NDH-1 is composed of 14 different subunits. Subunits NuoA, H, J, K, L, M, N constitute the membrane sector of the complex.

It localises to the cell inner membrane. It carries out the reaction a quinone + NADH + 5 H(+)(in) = a quinol + NAD(+) + 4 H(+)(out). NDH-1 shuttles electrons from NADH, via FMN and iron-sulfur (Fe-S) centers, to quinones in the respiratory chain. The immediate electron acceptor for the enzyme in this species is believed to be ubiquinone. Couples the redox reaction to proton translocation (for every two electrons transferred, four hydrogen ions are translocated across the cytoplasmic membrane), and thus conserves the redox energy in a proton gradient. This is NADH-quinone oxidoreductase subunit K from Magnetococcus marinus (strain ATCC BAA-1437 / JCM 17883 / MC-1).